The chain runs to 362 residues: Peptide chain release factor 1 (362 aa).

Gln-237 bears the N5-methylglutamine mark. Residues 285–295 (EEKRHAEEAST) are compositionally biased toward basic and acidic residues. Residues 285-311 (EEKRHAEEASTRRNLLGSGDRSDRIRT) are disordered.

It belongs to the prokaryotic/mitochondrial release factor family. Methylated by PrmC. Methylation increases the termination efficiency of RF1.

The protein localises to the cytoplasm. Peptide chain release factor 1 directs the termination of translation in response to the peptide chain termination codons UAG and UAA. This Photobacterium profundum (strain SS9) protein is Peptide chain release factor 1.